A 320-amino-acid polypeptide reads, in one-letter code: Cytochrome f (320 aa).

The first 35 residues, Met-1–Ala-35, serve as a signal peptide directing secretion. Heme-binding residues include Tyr-36, Cys-56, Cys-59, and His-60. Residues Val-286 to Lys-306 form a helical membrane-spanning segment.

The protein belongs to the cytochrome f family. The 4 large subunits of the cytochrome b6-f complex are cytochrome b6, subunit IV (17 kDa polypeptide, petD), cytochrome f and the Rieske protein, while the 4 small subunits are PetG, PetL, PetM and PetN. The complex functions as a dimer. Heme is required as a cofactor.

The protein resides in the plastid. It is found in the chloroplast thylakoid membrane. Component of the cytochrome b6-f complex, which mediates electron transfer between photosystem II (PSII) and photosystem I (PSI), cyclic electron flow around PSI, and state transitions. The polypeptide is Cytochrome f (Saccharum hybrid (Sugarcane)).